Here is a 900-residue protein sequence, read N- to C-terminus: Isoleucine--tRNA ligase (900 aa).

The 'HIGH' region signature appears at 58-68 (PYANGNIHIGH). Residue glutamate 552 coordinates L-isoleucyl-5'-AMP. The short motif at 593 to 597 (KMSKS) is the 'KMSKS' region element. Lysine 596 serves as a coordination point for ATP.

Belongs to the class-I aminoacyl-tRNA synthetase family. IleS type 1 subfamily. Monomer.

The protein localises to the cytoplasm. It catalyses the reaction tRNA(Ile) + L-isoleucine + ATP = L-isoleucyl-tRNA(Ile) + AMP + diphosphate. Functionally, catalyzes the attachment of isoleucine to tRNA(Ile). As IleRS can inadvertently accommodate and process structurally similar amino acids such as valine, to avoid such errors it has two additional distinct tRNA(Ile)-dependent editing activities. One activity is designated as 'pretransfer' editing and involves the hydrolysis of activated Val-AMP. The other activity is designated 'posttransfer' editing and involves deacylation of mischarged Val-tRNA(Ile). The protein is Isoleucine--tRNA ligase of Ureaplasma parvum serovar 3 (strain ATCC 700970).